Reading from the N-terminus, the 74-residue chain is Translation initiation factor IF-1, chloroplastic (74 aa).

The S1-like domain maps to 1–72 (MERQNLIEME…TKGRITYRLR (72 aa)).

Belongs to the IF-1 family. In terms of assembly, component of the 30S ribosomal translation pre-initiation complex which assembles on the 30S ribosome in the order IF-2 and IF-3, IF-1 and N-formylmethionyl-tRNA(fMet); mRNA recruitment can occur at any time during PIC assembly.

Its subcellular location is the plastid. The protein localises to the chloroplast. One of the essential components for the initiation of protein synthesis. Stabilizes the binding of IF-2 and IF-3 on the 30S subunit to which N-formylmethionyl-tRNA(fMet) subsequently binds. Helps modulate mRNA selection, yielding the 30S pre-initiation complex (PIC). Upon addition of the 50S ribosomal subunit IF-1, IF-2 and IF-3 are released leaving the mature 70S translation initiation complex. This Mesostigma viride (Green alga) protein is Translation initiation factor IF-1, chloroplastic.